Here is an 815-residue protein sequence, read N- to C-terminus: uncharacterized protein (815 aa).

Disordered regions lie at residues 123 to 183 (QSNT…QPST), 249 to 274 (NVNNNKNNKNQNNNNNNNIENSNNTN), 592 to 668 (IKQN…NLNS), and 765 to 815 (NNEE…EEIK). Polar residues-rich tracts occupy residues 135 to 154 (SIITNSDSPRLIVSDTTSTT) and 174 to 183 (DSITVLQPST). Residues 595-611 (NGSSSSNNNSKLSSTNS) are compositionally biased toward low complexity. The segment covering 612–639 (GQTSDNPINSSNGGQSIKKQGSNLSLNR) has biased composition (polar residues). The segment covering 640–668 (QQSSTKLNNQSNNNNNNNANTTNQNNLNS) has biased composition (low complexity). The segment covering 765–782 (NNEEHNNNNKENNNENNK) has biased composition (basic and acidic residues). Residues 783–809 (ENINNNNNIINNNNDNNCNENNNNCNE) are compositionally biased toward low complexity.

This is an uncharacterized protein from Dictyostelium discoideum (Social amoeba).